Here is a 162-residue protein sequence, read N- to C-terminus: Thy-1 membrane glycoprotein (162 aa).

The signal sequence occupies residues 1-19 (MNPAISVALLLSVLQVSRG). Gln20 is modified (pyrrolidone carboxylic acid). In terms of domain architecture, Ig-like V-type spans 20–127 (QKVTSLTACL…NKSISVYRDK (108 aa)). Cystine bridges form between Cys28/Cys131 and Cys38/Cys105. N-linked (GlcNAc...) asparagine glycosylation is found at Asn42, Asn94, and Asn118. The GPI-anchor amidated cysteine; alternate moiety is linked to residue Cys131. The propeptide at 132 to 162 (GGISLLVQNTSWMLLLLLSLSLLQALDFISL) is removed in mature form.

The protein resides in the cell membrane. In terms of biological role, may play a role in cell-cell or cell-ligand interactions during synaptogenesis and other events in the brain. The protein is Thy-1 membrane glycoprotein (Thy1) of Mus musculus (Mouse).